Reading from the N-terminus, the 255-residue chain is 14-3-3-like protein GF14 psi (255 aa).

Ser-66 carries the phosphoserine modification. Thr-162 bears the Phosphothreonine mark. A Phosphoserine modification is found at Ser-189. A phosphothreonine mark is found at Thr-210 and Thr-238.

Belongs to the 14-3-3 family. As to quaternary structure, component of a DNA binding complex that binds to the G box. Interacts with IDH3, AGT3, GLN1-1, GLN1-2, GLN1-4, SAM1, SAM2, MDH1, METK3 and MDH2. Binds to 1-aminocyclopropane-1-carboxylate synthases (ACS) such as ACS2, ACS5, ACS6, ACS8, and ACS11. Interacts with FD. Interacts with DREB1A and DREB1B in the nucleus. Interacts with CINV1.

Its subcellular location is the cytoplasm. The protein resides in the nucleus. In terms of biological role, is associated with a DNA binding complex that binds to the G box, a well-characterized cis-acting DNA regulatory element found in plant genes. Involved in the regulation of nutrient metabolism. Reciprocal negative transcription regulation of miR396. Negative regulator of constitutive freezing tolerance and cold acclimation by controlling cold-induced gene expression partially through an ethylene (ET)-dependent pathway; prevents ethylene (ET) biosynthesis, probably by binding 1-aminocyclopropane-1-carboxylate synthases (ACS) to reduce their stability, thus contributing to establish adequate ET levels under both standard and low-temperature conditions. This chain is 14-3-3-like protein GF14 psi, found in Arabidopsis thaliana (Mouse-ear cress).